A 270-amino-acid chain; its full sequence is Phosphate import ATP-binding protein PstB 1 (270 aa).

Positions 24-265 (LAVERLNLFY…PYQRQTEDYI (242 aa)) constitute an ABC transporter domain. Position 56–63 (56–63 (GPSGCGKS)) interacts with ATP.

Belongs to the ABC transporter superfamily. Phosphate importer (TC 3.A.1.7) family. As to quaternary structure, the complex is composed of two ATP-binding proteins (PstB), two transmembrane proteins (PstC and PstA) and a solute-binding protein (PstS).

It localises to the cell inner membrane. It catalyses the reaction phosphate(out) + ATP + H2O = ADP + 2 phosphate(in) + H(+). Functionally, part of the ABC transporter complex PstSACB involved in phosphate import. Responsible for energy coupling to the transport system. In Yersinia pestis bv. Antiqua (strain Antiqua), this protein is Phosphate import ATP-binding protein PstB 1.